A 380-amino-acid chain; its full sequence is MTNIRKTHPLMKIINHSFIDLPTPSNISSWWNFGSLLGICLVLQILTGLFLAMHYTSDTTTAFSSVTHICRDVNYGWFIRYLHANGASMFFICLYIHVGRGIYYGSFTSMETWNVGIILLFTVMATAFMGYVLPWGQMSFWGATVITNLLSAIPYIGTTLVEWIWGGFSVDKPTLTRFFAFHFILPFIIVALVMVHLLFLHETGSNNPTGLNSNADKIPFHPYYTTKDILGVLLLILFLISLVLFAPDLLGDPDNYTPANPLITPPHIKPEWYFLFAYAILRSIPNKLGGVLALITSILTLTLLPYLYTSKLRSLMFRPLTQLCYWMLVSDIMILTWIGAQPVEYPFITIGQVASILYFTIIIILMPMSTMLEDKMLNWN.

4 consecutive transmembrane segments (helical) span residues 33–53 (FGSL…FLAM), 77–98 (WFIR…YIHV), 113–133 (WNVG…GYVL), and 178–198 (FFAF…VHLL). Heme b contacts are provided by His83 and His97. The heme b site is built by His182 and His196. His201 serves as a coordination point for a ubiquinone. 4 helical membrane-spanning segments follow: residues 226 to 246 (TKDI…VLFA), 288 to 308 (LGGV…PYLY), 320 to 340 (LTQL…WIGA), and 347 to 367 (FITI…ILMP).

It belongs to the cytochrome b family. The cytochrome bc1 complex contains 11 subunits: 3 respiratory subunits (MT-CYB, CYC1 and UQCRFS1), 2 core proteins (UQCRC1 and UQCRC2) and 6 low-molecular weight proteins (UQCRH/QCR6, UQCRB/QCR7, UQCRQ/QCR8, UQCR10/QCR9, UQCR11/QCR10 and a cleavage product of UQCRFS1). This cytochrome bc1 complex then forms a dimer. It depends on heme b as a cofactor.

Its subcellular location is the mitochondrion inner membrane. Its function is as follows. Component of the ubiquinol-cytochrome c reductase complex (complex III or cytochrome b-c1 complex) that is part of the mitochondrial respiratory chain. The b-c1 complex mediates electron transfer from ubiquinol to cytochrome c. Contributes to the generation of a proton gradient across the mitochondrial membrane that is then used for ATP synthesis. The polypeptide is Cytochrome b (MT-CYB) (Cricetomys emini (Emin's giant pouched rat)).